The sequence spans 188 residues: Elongation factor P (188 aa).

The protein belongs to the elongation factor P family.

The protein localises to the cytoplasm. The protein operates within protein biosynthesis; polypeptide chain elongation. Involved in peptide bond synthesis. Stimulates efficient translation and peptide-bond synthesis on native or reconstituted 70S ribosomes in vitro. Probably functions indirectly by altering the affinity of the ribosome for aminoacyl-tRNA, thus increasing their reactivity as acceptors for peptidyl transferase. The sequence is that of Elongation factor P from Exiguobacterium sibiricum (strain DSM 17290 / CCUG 55495 / CIP 109462 / JCM 13490 / 255-15).